A 156-amino-acid chain; its full sequence is MTQSQYSQCARDALAERIVDTKTRKHLTFEQINEGTGLSVAFTTAALLGQHPLPADAARVVAAKLDLDDDAVRLLQTIPVRGSIPGGVPTDPTIYRFYEIVQVYGSTLKALIHEQFGDGIISAINFKLDIKKVDDPDGGSRAVITLDGKYLPTKPF.

Catalysis depends on residues Arg-96, Glu-99, and Ser-122.

This sequence belongs to the cyanase family.

The catalysed reaction is cyanate + hydrogencarbonate + 3 H(+) = NH4(+) + 2 CO2. Catalyzes the reaction of cyanate with bicarbonate to produce ammonia and carbon dioxide. The chain is Cyanate hydratase from Burkholderia thailandensis (strain ATCC 700388 / DSM 13276 / CCUG 48851 / CIP 106301 / E264).